The primary structure comprises 425 residues: MLNIKWIRENQKLFDEKLSQRFIEPMSSKIAMLDREKRKIMSLIQEFQHARKVKSKILGNMASKSGEEFEGLQRDVKHINEKLEALEQDLNNNNELNELLNMFPNIPDEEVPYGMDESMNKLVRTYGETNPNALNKQHFELGIKLNLMDFEQTAKISGTRFVTLKGDLAKLERALINFMIDVHTKELDFFEISPPVLVRDNAMYNAGQLPKFAEESFATTNGYRLIPTAEVPLVNIVADTIIPREKLPMRYVAYTPCFRSEAGSSGRDTRGMIRLHQFGKVELVSITTPEESKNEHEYITNASETILQKLNLPYRVMLLCTGDMGFAAKKTYDIEVWLPGQKQYREIASCSNCGDFQARRMKARYKEFGSNETTLVHTLNASGLPIGRTMVAILENYQNEDGSITIPDVLINYMGGLQKITAYSE.

L-serine is bound at residue 228–230 (TAE). Residue 259 to 261 (RSE) coordinates ATP. Position 282 (Glu-282) interacts with L-serine. 346–349 (EIAS) is a binding site for ATP. Ser-382 is a binding site for L-serine.

Belongs to the class-II aminoacyl-tRNA synthetase family. Type-1 seryl-tRNA synthetase subfamily. In terms of assembly, homodimer. The tRNA molecule binds across the dimer.

Its subcellular location is the cytoplasm. The catalysed reaction is tRNA(Ser) + L-serine + ATP = L-seryl-tRNA(Ser) + AMP + diphosphate + H(+). It catalyses the reaction tRNA(Sec) + L-serine + ATP = L-seryl-tRNA(Sec) + AMP + diphosphate + H(+). The protein operates within aminoacyl-tRNA biosynthesis; selenocysteinyl-tRNA(Sec) biosynthesis; L-seryl-tRNA(Sec) from L-serine and tRNA(Sec): step 1/1. Functionally, catalyzes the attachment of serine to tRNA(Ser). Is also able to aminoacylate tRNA(Sec) with serine, to form the misacylated tRNA L-seryl-tRNA(Sec), which will be further converted into selenocysteinyl-tRNA(Sec). This chain is Serine--tRNA ligase, found in Rickettsia massiliae (strain Mtu5).